Here is a 331-residue protein sequence, read N- to C-terminus: Ketol-acid reductoisomerase (NADP(+)) (331 aa).

In terms of domain architecture, KARI N-terminal Rossmann spans 2 to 182 (AKMYYDQDAD…GGTKAGAIET (181 aa)). Residues 25–28 (FGSQ), Ser-51, Ser-53, and 83–86 (DEKQ) each bind NADP(+). Residue His-108 is part of the active site. Gly-134 is a binding site for NADP(+). Residues 183 to 328 (TFKEETETDL…KSLREMMPWL (146 aa)) form the KARI C-terminal knotted domain. Asp-191, Glu-195, Glu-227, and Glu-231 together coordinate Mg(2+). Ser-252 contacts substrate.

The protein belongs to the ketol-acid reductoisomerase family. The cofactor is Mg(2+).

The catalysed reaction is (2R)-2,3-dihydroxy-3-methylbutanoate + NADP(+) = (2S)-2-acetolactate + NADPH + H(+). It catalyses the reaction (2R,3R)-2,3-dihydroxy-3-methylpentanoate + NADP(+) = (S)-2-ethyl-2-hydroxy-3-oxobutanoate + NADPH + H(+). It participates in amino-acid biosynthesis; L-isoleucine biosynthesis; L-isoleucine from 2-oxobutanoate: step 2/4. The protein operates within amino-acid biosynthesis; L-valine biosynthesis; L-valine from pyruvate: step 2/4. Functionally, involved in the biosynthesis of branched-chain amino acids (BCAA). Catalyzes an alkyl-migration followed by a ketol-acid reduction of (S)-2-acetolactate (S2AL) to yield (R)-2,3-dihydroxy-isovalerate. In the isomerase reaction, S2AL is rearranged via a Mg-dependent methyl migration to produce 3-hydroxy-3-methyl-2-ketobutyrate (HMKB). In the reductase reaction, this 2-ketoacid undergoes a metal-dependent reduction by NADPH to yield (R)-2,3-dihydroxy-isovalerate. The chain is Ketol-acid reductoisomerase (NADP(+)) from Caldanaerobacter subterraneus subsp. tengcongensis (strain DSM 15242 / JCM 11007 / NBRC 100824 / MB4) (Thermoanaerobacter tengcongensis).